The primary structure comprises 166 residues: Fer3-like protein (166 aa).

Residues 57–88 (FEEGDPEEEECEVDQGDGEEEEEEERGRGVSL) are disordered. Residues 60–80 (GDPEEEECEVDQGDGEEEEEE) show a composition bias toward acidic residues. Residues 101 to 153 (AQRQAANIRERKRMFNLNEAFDQLRRKVPTFAYEKRLSRIETLRLAIVYISFM) enclose the bHLH domain.

As to quaternary structure, heterodimer with TCF3/E12. Interacts with the bHLH domain of TCF3/E12.

The protein localises to the nucleus. Transcription factor that binds to the E-box and functions as inhibitor of transcription. DNA binding requires dimerization with an E protein. Inhibits transcription activation by ASCL1/MASH1 by sequestering E proteins. This chain is Fer3-like protein (FERD3L), found in Homo sapiens (Human).